A 1049-amino-acid chain; its full sequence is MVFPMWTLKRQILILFNIILISKLLGARWFPKTLPCDVTLDVPKNHVIVDCTDKHLTEIPGGIPTNTTNLTLTINHIPDISPASFHRLDHLVEIDFRCNCVPIPLGSKNNMCIKRLQIKPRSFSGLTYLKSLYLDGNQLLEIPQGLPPSLQLLSLEANNIFSIRKENLTELANIEILYLGQNCYYRNPCYVSYSIEKDAFLNLTKLKVLSLKDNNVTAVPTVLPSTLTELYLYNNMIAKIQEDDFNNLNQLQILDLSGNCPRCYNAPFPCAPCKNNSPLQIPVNAFDALTELKVLRLHSNSLQHVPPRWFKNINKLQELDLSQNFLAKEIGDAKFLHFLPSLIQLDLSFNFELQVYRASMNLSQAFSSLKSLKILRIRGYVFKELKSFNLSPLHNLQNLEVLDLGTNFIKIANLSMFKQFKRLKVIDLSVNKISPSGDSSEVGFCSNARTSVESYEPQVLEQLHYFRYDKYARSCRFKNKEASFMSVNESCYKYGQTLDLSKNSIFFVKSSDFQHLSFLKCLNLSGNLISQTLNGSEFQPLAELRYLDFSNNRLDLLHSTAFEELHKLEVLDISSNSHYFQSEGITHMLNFTKNLKVLQKLMMNDNDISSSTSRTMESESLRTLEFRGNHLDVLWREGDNRYLQLFKNLLKLEELDISKNSLSFLPSGVFDGMPPNLKNLSLAKNGLKSFSWKKLQCLKNLETLDLSHNQLTTVPERLSNCSRSLKNLILKNNQIRSLTKYFLQDAFQLRYLDLSSNKIQMIQKTSFPENVLNNLKMLLLHHNRFLCTCDAVWFVWWVNHTEVTIPYLATDVTCVGPGAHKGQSVISLDLYTCELDLTNLILFSLSISVSLFLMVMMTASHLYFWDVWYIYHFCKAKIKGYQRLISPDCCYDAFIVYDTKDPAVTEWVLAELVAKLEDPREKHFNLCLEERDWLPGQPVLENLSQSIQLSKKTVFVMTDKYAKTENFKIAFYLSHQRLMDEKVDVIILIFLEKPFQKSKFLQLRKRLCGSSVLEWPTNPQAHPYFWQCLKNALATDNHVAYSQVFKETV.

An N-terminal signal peptide occupies residues 1 to 26; it reads MVFPMWTLKRQILILFNIILISKLLG. Topologically, residues 27 to 839 are extracellular; the sequence is ARWFPKTLPC…LYTCELDLTN (813 aa). 6 LRR repeats span residues 43–64, 65–87, 110–126, 127–149, 151–170, and 171–195; these read PKNHVIVDCTDKHLTEIPGGIP, TNTTNLTLTINHIPDISPASFHR, NMCIKRLQIKPRSFSGL, TYLKSLYLDGNQLLEIPQGLPPS, QLLSLEANNIFSIRKENLTE, and LANIEILYLGQNCYYRNPCYVSYSI. 2 N-linked (GlcNAc...) asparagine glycosylation sites follow: Asn-66 and Asn-69. N-linked (GlcNAc...) asparagine glycosylation occurs at Asn-167. N-linked (GlcNAc...) asparagine glycosylation is found at Asn-202 and Asn-215. LRR repeat units lie at residues 203–226, 228–247, 248–275, 289–312, 314–337, 339–368, 369–392, 396–419, and 421–443; these read LTKLKVLSLKDNNVTAVPTVLPST, TELYLYNNMIAKIQEDDFNN, LNQLQILDLSGNCPRCYNAPFPCAPCKN, LTELKVLRLHSNSLQHVPPRWFKN, NKLQELDLSQNFLAKEIGDAKFLH, LPSLIQLDLSFNFELQVYRASMNLSQAFSS, LKSLKILRIRGYVFKELKSFNLSP, LQNLEVLDLGTNFIKIANLSMFKQ, and KRLKVIDLSVNKISPSGDSSEVG. An N-linked (GlcNAc...) asparagine glycan is attached at Asn-361. Asn-413 carries N-linked (GlcNAc...) asparagine glycosylation. The N-linked (GlcNAc...) asparagine glycan is linked to Asn-488. LRR repeat units lie at residues 492 to 515, 516 to 540, 541 to 564, and 566 to 588; these read YKYGQTLDLSKNSIFFVKSSDFQH, LSFLKCLNLSGNLISQTLNGSEFQP, LAELRYLDFSNNRLDLLHSTAFEE, and HKLEVLDISSNSHYFQSEGITHM. N-linked (GlcNAc...) asparagine glycans are attached at residues Asn-523 and Asn-534. Asn-590 carries an N-linked (GlcNAc...) asparagine glycan. LRR repeat units follow at residues 595-618, 619-644, 649-672, 674-697, 698-721, 723-745, 746-769, and 772-795; these read LKVLQKLMMNDNDISSSTSRTMES, ESLRTLEFRGNHLDVLWREGDNRYLQ, LLKLEELDISKNSLSFLPSGVFDG, PPNLKNLSLAKNGLKSFSWKKLQC, LKNLETLDLSHNQLTTVPERLSNC, RSLKNLILKNNQIRSLTKYFLQD, AFQLRYLDLSSNKIQMIQKTSFPE, and LNNLKMLLLHHNRFLCTCDAVWFV. 2 N-linked (GlcNAc...) asparagine glycosylation sites follow: Asn-679 and Asn-720. The N-linked (GlcNAc...) asparagine glycan is linked to Asn-799. A helical membrane pass occupies residues 840 to 860; that stretch reads LILFSLSISVSLFLMVMMTAS. Over 861–1049 the chain is Cytoplasmic; it reads HLYFWDVWYI…AYSQVFKETV (189 aa). The 145-residue stretch at 889-1033 folds into the TIR domain; the sequence is CCYDAFIVYD…YFWQCLKNAL (145 aa).

This sequence belongs to the Toll-like receptor family. In terms of assembly, homodimer. Interacts with MYD88 via their respective TIR domains. Interacts with UNC93B1. Interacts with SMPDL3B. Detected in brain, placenta, spleen, stomach, small intestine, lung and in plasmacytoid pre-dendritic cells. Expressed in peripheral mononuclear blood cells.

It localises to the endoplasmic reticulum membrane. Its subcellular location is the endosome. The protein resides in the lysosome. The protein localises to the cytoplasmic vesicle. It is found in the phagosome. Its activity is regulated as follows. Activated by guanosine analogs including deoxyguanosine, 7-thia-8-oxoguanosine or 7-deazaguanosine in a RNA-independent manner. Activated by imiquimod. Endosomal receptor that plays a key role in innate and adaptive immunity. Controls host immune response against pathogens through recognition of uridine-containing single strand RNAs (ssRNAs) of viral origin or guanosine analogs. Upon binding to agonists, undergoes dimerization that brings TIR domains from the two molecules into direct contact, leading to the recruitment of TIR-containing downstream adapter MYD88 through homotypic interaction. In turn, the Myddosome signaling complex is formed involving IRAK4, IRAK1, TRAF6, TRAF3 leading to activation of downstream transcription factors NF-kappa-B and IRF7 to induce pro-inflammatory cytokines and interferons, respectively. In plasmacytoid dendritic cells, RNASET2 endonuclease cooperates with PLD3 or PLD4 5'-&gt;3' exonucleases to process RNA and release 2',3'-cyclic guanosine monophosphate (2',3'-cGMP) and cytidine-rich RNA fragments that occupy TLR7 ligand-binding pockets and trigger a signaling-competent state. This Homo sapiens (Human) protein is Toll-like receptor 7.